Reading from the N-terminus, the 2920-residue chain is Cadherin-related hmr-1 (2920 aa).

A signal peptide spans 1 to 19; that stretch reads MSWNILLILLISNLDEVLA. Topologically, residues 20 to 2779 are extracellular; the sequence is KTLLKLPSNA…AVSKLGISSP (2760 aa). N-linked (GlcNAc...) asparagine glycans are attached at residues N72, N243, N253, N339, and N508. Cadherin domains lie at 322-422, 425-530, 531-642, 643-747, 749-865, 871-979, 980-1093, 1097-1211, 1212-1335, 1336-1436, 1438-1546, 1548-1661, 1662-1772, and 1772-1874; these read SSRS…PPSF, SPLP…PPQF, AKQE…VPTF, TRPL…SAVF, PTSQ…KPEF, YSDI…SPQF, ERPS…APKW, PDCK…VPQF, TVDL…APSF, EEQK…APQF, QQKY…SPIF, ERLF…APFF, EKTR…APHI, and IHGA…EPYT. 4 N-linked (GlcNAc...) asparagine glycosylation sites follow: N658, N685, N715, and N826. N1177 carries an N-linked (GlcNAc...) asparagine glycan. N-linked (GlcNAc...) asparagine glycosylation occurs at N1417. N-linked (GlcNAc...) asparagine glycosylation occurs at N1646. N-linked (GlcNAc...) asparagine glycosylation is found at N1935, N2224, and N2232. The region spanning 2246–2283 is the EGF-like 1 domain; that stretch reads APPACQHSLCHNDGVCHNTNPGFFCECRNDGLKGARCQ. Intrachain disulfides connect C2250–C2261, C2255–C2270, and C2272–C2282. The region spanning 2284–2478 is the Laminin G-like domain; it reads GTTRSFGGNG…AFEQNSEKGC (195 aa). N-linked (GlcNAc...) asparagine glycans are attached at residues N2307 and N2332. Cystine bridges form between C2452/C2478, C2501/C2515, and C2517/C2526. One can recognise an EGF-like 2 domain in the interval 2492–2527; sequence SLNHCIHGDCFADVQGSGAMVAKCVCDPGWGGARCE. An N-linked (GlcNAc...) asparagine glycan is attached at N2623. A helical membrane pass occupies residues 2780–2800; it reads AIILILVSLALLILLVMMMVV. Residues 2801 to 2920 lie on the Cytoplasmic side of the membrane; that stretch reads YTRRSPGAFE…VTLESIESAQ (120 aa). S2839 carries the phosphoserine modification. A disordered region spans residues 2858–2891; that stretch reads IGGHPPHYPPRGMAPPKDDHELNSKIKDLETDQN. Over residues 2873-2887 the composition is skewed to basic and acidic residues; sequence PKDDHELNSKIKDLE. S2909 is subject to Phosphoserine. At T2912 the chain carries Phosphothreonine. Phosphoserine is present on residues S2915 and S2918.

Monomer in solution. Isoform a is a component of a core catenin-cadherin complex consisting of hmr-1, hmp-1 and hmp-2; the complex localizes to adherens junctions. Isoform a interacts with hmp-2; the interaction is direct. Isoform a interacts (via intracellular domain) with jac-1. In terms of processing, phosphorylation at T-2912 increases the binding affinity for hmp-2. Post-translationally, sumoylated. Sumoylation prevents accumulation at adherens junctions and decreases the binding affinity for hmp-2. Expressed in epidermal cells (at protein level). In terms of tissue distribution, neuron-specific.

Its subcellular location is the cell membrane. It localises to the cell junction. It is found in the adherens junction. The protein localises to the cell projection. The protein resides in the dendrite. Its function is as follows. Cadherins are calcium-dependent cell adhesion proteins. They preferentially interact with themselves in a homophilic manner in connecting cells; cadherins may thus contribute to the sorting of heterogeneous cell types. Required for adherens junction assembly and connecting adherens junctions to the cytoskeleton. In terms of biological role, isoform a is required for cell migration during body enclosure and cell shape changes during body elongation. Required for proper localization of other junctional components, such as hmp-1, hmp-2, jac-1 and pac-1. Recruitment of pac-1 is required to establish cell polarity, independent of its role in cell adhesion. Required for primodial germ cell ingression and adherence to endodermal cells during gastrulation. Isoform b is involved in axonal guidance in a subset of motor neurons. This chain is Cadherin-related hmr-1, found in Caenorhabditis elegans.